We begin with the raw amino-acid sequence, 395 residues long: Cytoplasmic tRNA 2-thiolation protein 1 (395 aa).

Over residues 297–309 (TVAYKNKNKNKKK) the composition is skewed to basic residues. A disordered region spans residues 297–335 (TVAYKNKNKNKKKSNSEQEEQEKQEQEVNPDGSISLNRN).

The protein belongs to the TtcA family. CTU1/NCS6/ATPBD3 subfamily.

Its subcellular location is the cytoplasm. It participates in tRNA modification; 5-methoxycarbonylmethyl-2-thiouridine-tRNA biosynthesis. Its function is as follows. Plays a central role in 2-thiolation of mcm(5)S(2)U at tRNA wobble positions of tRNA(Lys), tRNA(Glu) and tRNA(Gln). Directly binds tRNAs and probably acts by catalyzing adenylation of tRNAs, an intermediate required for 2-thiolation. It is unclear whether it acts as a sulfurtransferase that transfers sulfur from thiocarboxylated URM1 onto the uridine of tRNAs at wobble position. Prior mcm(5) tRNA modification by the elongator complex is required for 2-thiolation. May also be involved in protein urmylation. The sequence is that of Cytoplasmic tRNA 2-thiolation protein 1 from Candida albicans (strain SC5314 / ATCC MYA-2876) (Yeast).